A 617-amino-acid chain; its full sequence is 1-deoxy-D-xylulose-5-phosphate synthase (617 aa).

Thiamine diphosphate contacts are provided by residues His80 and 121 to 123; that span reads GHS. Asp152 is a binding site for Mg(2+). Residues 153–154, Asn181, Tyr277, and Glu360 each bind thiamine diphosphate; that span reads GA. Asn181 is a binding site for Mg(2+).

Belongs to the transketolase family. DXPS subfamily. In terms of assembly, homodimer. Mg(2+) is required as a cofactor. Requires thiamine diphosphate as cofactor.

It catalyses the reaction D-glyceraldehyde 3-phosphate + pyruvate + H(+) = 1-deoxy-D-xylulose 5-phosphate + CO2. It participates in metabolic intermediate biosynthesis; 1-deoxy-D-xylulose 5-phosphate biosynthesis; 1-deoxy-D-xylulose 5-phosphate from D-glyceraldehyde 3-phosphate and pyruvate: step 1/1. In terms of biological role, catalyzes the acyloin condensation reaction between C atoms 2 and 3 of pyruvate and glyceraldehyde 3-phosphate to yield 1-deoxy-D-xylulose-5-phosphate (DXP). This chain is 1-deoxy-D-xylulose-5-phosphate synthase, found in Blochmanniella floridana.